We begin with the raw amino-acid sequence, 98 residues long: Large ribosomal subunit protein bL21 (98 aa).

It belongs to the bacterial ribosomal protein bL21 family. As to quaternary structure, part of the 50S ribosomal subunit. Contacts protein L20.

In terms of biological role, this protein binds to 23S rRNA in the presence of protein L20. This Aquifex aeolicus (strain VF5) protein is Large ribosomal subunit protein bL21.